The sequence spans 483 residues: Altronate oxidoreductase (483 aa).

Residue 18 to 29 participates in NAD(+) binding; that stretch reads IIQFGEGNFLRA.

This sequence belongs to the mannitol dehydrogenase family. UxaB subfamily.

It carries out the reaction D-altronate + NAD(+) = keto-D-tagaturonate + NADH + H(+). Its pathway is carbohydrate metabolism; pentose and glucuronate interconversion. The chain is Altronate oxidoreductase (uxaB) from Escherichia coli O157:H7.